A 443-amino-acid chain; its full sequence is tRNA-2-methylthio-N(6)-dimethylallyladenosine synthase (443 aa).

Residues 3 to 120 form the MTTase N-terminal domain; sequence SKLYIRTFGC…LPDLIDARRR (118 aa). 6 residues coordinate [4Fe-4S] cluster: Cys-12, Cys-49, Cys-83, Cys-157, Cys-161, and Cys-164. In terms of domain architecture, Radical SAM core spans 143 to 375; sequence RTEGSTAFVS…QEKIQLNAQA (233 aa). In terms of domain architecture, TRAM spans 378–441; sequence QGMVDTVQRI…SHTLRGEISD (64 aa).

The protein belongs to the methylthiotransferase family. MiaB subfamily. As to quaternary structure, monomer. Requires [4Fe-4S] cluster as cofactor.

Its subcellular location is the cytoplasm. The enzyme catalyses N(6)-dimethylallyladenosine(37) in tRNA + (sulfur carrier)-SH + AH2 + 2 S-adenosyl-L-methionine = 2-methylsulfanyl-N(6)-dimethylallyladenosine(37) in tRNA + (sulfur carrier)-H + 5'-deoxyadenosine + L-methionine + A + S-adenosyl-L-homocysteine + 2 H(+). Catalyzes the methylthiolation of N6-(dimethylallyl)adenosine (i(6)A), leading to the formation of 2-methylthio-N6-(dimethylallyl)adenosine (ms(2)i(6)A) at position 37 in tRNAs that read codons beginning with uridine. This chain is tRNA-2-methylthio-N(6)-dimethylallyladenosine synthase, found in Nitrosomonas europaea (strain ATCC 19718 / CIP 103999 / KCTC 2705 / NBRC 14298).